We begin with the raw amino-acid sequence, 383 residues long: Galactokinase (383 aa).

Glutamate 34 to aspartate 37 provides a ligand contact to substrate. ATP is bound at residue glycine 124–serine 130. Residues serine 130 and glutamate 162 each contribute to the Mg(2+) site. Aspartate 174 (proton acceptor) is an active-site residue. Tyrosine 223 is a binding site for substrate.

The protein belongs to the GHMP kinase family. GalK subfamily.

The protein resides in the cytoplasm. The enzyme catalyses alpha-D-galactose + ATP = alpha-D-galactose 1-phosphate + ADP + H(+). The protein operates within carbohydrate metabolism; galactose metabolism. Functionally, catalyzes the transfer of the gamma-phosphate of ATP to D-galactose to form alpha-D-galactose-1-phosphate (Gal-1-P). The sequence is that of Galactokinase from Yersinia enterocolitica serotype O:8 / biotype 1B (strain NCTC 13174 / 8081).